Here is a 579-residue protein sequence, read N- to C-terminus: Nuclear receptor coactivator 5 (579 aa).

N-acetylmethionine is present on methionine 1. The tract at residues 1-78 (MNTAPSRPSP…LRDHRDSRSV (78 aa)) is disordered. The interval 1-158 (MNTAPSRPSP…RDSFDGRGPP (158 aa)) is transcription repression. Threonine 3 bears the Phosphothreonine mark. Serine 9, serine 21, serine 24, serine 29, and serine 34 each carry phosphoserine. Basic and acidic residues-rich tracts occupy residues 11–62 (TRRD…DLRD) and 68–78 (DLRDHRDSRSV). Phosphoserine is present on residues serine 96, serine 116, serine 126, serine 143, and serine 151. Positions 148–173 (YRDSFDGRGPPGPESQSRAKERLKRE) are disordered. A compositionally biased stretch (basic and acidic residues) spans 164 to 173 (SRAKERLKRE). At threonine 274 the chain carries Phosphothreonine. An LXXLL motif motif is present at residues 345 to 349 (LINLL). 3 disordered regions span residues 375-428 (MRSS…PTSQ), 444-537 (VTAN…NFDN), and 560-579 (QTTAQMGQPQAPMGSYQRHY). Serine 378 carries the post-translational modification Phosphoserine. Threonine 379 carries the phosphothreonine modification. Phosphoserine is present on serine 381. Over residues 395–413 (SGASLKTQPSSQPLQSGQV) the composition is skewed to polar residues. The segment covering 446–457 (ANSSSASPSVAA) has biased composition (low complexity). Positions 458 to 579 (GNTPNQNFST…APMGSYQRHY (122 aa)) are transcription activation. 2 stretches are compositionally biased toward polar residues: residues 459–485 (NTPNQNFSTAANSQPQQRSQASGNQPP) and 520–537 (SNMTSQRPVSSTGINFDN).

Binds HTATIP2/TIP30. Interacts with YLPM1. Forms a complex with ILF2, ILF3, YLPM1, KHDRBS1, RBMX and PPP1CA. In terms of tissue distribution, widely expressed.

The protein localises to the nucleus. Its function is as follows. Nuclear receptor coregulator that can have both coactivator and corepressor functions. Interacts with nuclear receptors for steroids (ESR1 and ESR2) independently of the steroid binding domain (AF-2) of the ESR receptors, and with the orphan nuclear receptor NR1D2. Involved in the coactivation of nuclear steroid receptors (ER) as well as the corepression of MYC in response to 17-beta-estradiol (E2). The chain is Nuclear receptor coactivator 5 (NCOA5) from Homo sapiens (Human).